Here is a 559-residue protein sequence, read N- to C-terminus: T-complex protein 1 subunit gamma (559 aa).

A disulfide bridge links Cys-369 with Cys-375. Positions 537–559 (GGASVTDGNGQEIPETFGDARDG) are disordered.

The protein belongs to the TCP-1 chaperonin family. Heterooligomeric complex of about 850 to 900 kDa that forms two stacked rings, 12 to 16 nm in diameter.

The protein resides in the cytoplasm. Functionally, molecular chaperone; assists the folding of proteins upon ATP hydrolysis. Known to play a role, in vitro, in the folding of actin and tubulin. This chain is T-complex protein 1 subunit gamma, found in Tetrahymena pyriformis.